The following is a 544-amino-acid chain: Chaperonin GroEL 2 (544 aa).

ATP contacts are provided by residues 29 to 32 (TLGP), 86 to 90 (DGTTT), G413, 479 to 481 (NAA), and D495.

The protein belongs to the chaperonin (HSP60) family. In terms of assembly, forms a cylinder of 14 subunits composed of two heptameric rings stacked back-to-back. Interacts with the co-chaperonin GroES.

It is found in the cytoplasm. The catalysed reaction is ATP + H2O + a folded polypeptide = ADP + phosphate + an unfolded polypeptide.. In terms of biological role, together with its co-chaperonin GroES, plays an essential role in assisting protein folding. The GroEL-GroES system forms a nano-cage that allows encapsulation of the non-native substrate proteins and provides a physical environment optimized to promote and accelerate protein folding. This chain is Chaperonin GroEL 2, found in Synechococcus sp. (strain CC9605).